Reading from the N-terminus, the 142-residue chain is ATP synthase epsilon chain (142 aa).

This sequence belongs to the ATPase epsilon chain family. As to quaternary structure, F-type ATPases have 2 components, CF(1) - the catalytic core - and CF(0) - the membrane proton channel. CF(1) has five subunits: alpha(3), beta(3), gamma(1), delta(1), epsilon(1). CF(0) has three main subunits: a, b and c.

It localises to the cell membrane. Functionally, produces ATP from ADP in the presence of a proton gradient across the membrane. This chain is ATP synthase epsilon chain, found in Lactiplantibacillus plantarum (strain ATCC BAA-793 / NCIMB 8826 / WCFS1) (Lactobacillus plantarum).